The sequence spans 227 residues: Lipoprotein-releasing system ATP-binding protein LolD (227 aa).

Residues 7–227 (LQLTGVERHY…TISDGKIVDF (221 aa)) enclose the ABC transporter domain. 43–50 (APSGTGKS) provides a ligand contact to ATP.

Belongs to the ABC transporter superfamily. Lipoprotein translocase (TC 3.A.1.125) family. As to quaternary structure, the complex is composed of two ATP-binding proteins (LolD) and two transmembrane proteins (LolC and LolE).

It is found in the cell inner membrane. Its function is as follows. Part of the ABC transporter complex LolCDE involved in the translocation of mature outer membrane-directed lipoproteins, from the inner membrane to the periplasmic chaperone, LolA. Responsible for the formation of the LolA-lipoprotein complex in an ATP-dependent manner. This is Lipoprotein-releasing system ATP-binding protein LolD from Rhizobium johnstonii (strain DSM 114642 / LMG 32736 / 3841) (Rhizobium leguminosarum bv. viciae).